The primary structure comprises 582 residues: Type I secretion system ATP-binding protein PrsD (582 aa).

A run of 3 helical transmembrane segments spans residues 22 to 42 (FIGV…GSFF), 59 to 79 (LIAL…FELI), and 148 to 168 (IAIC…GGLI). The 280-residue stretch at 22 to 301 (FIGVGVASAL…AIGNWRGLVA (280 aa)) folds into the ABC transmembrane type-1 domain. One can recognise an ABC transporter domain in the interval 332–568 (LTVEGLASGP…VLRPQQVERQ (237 aa)). Residue 366–373 (GPSASGKS) participates in ATP binding.

Belongs to the ABC transporter superfamily. In terms of assembly, part of a type I secretion system composed of PrsD and PrsE.

It localises to the cell inner membrane. In terms of biological role, mediates secretion of glycanase ExsH. The polypeptide is Type I secretion system ATP-binding protein PrsD (prsD) (Rhizobium meliloti (strain 1021) (Ensifer meliloti)).